A 954-amino-acid polypeptide reads, in one-letter code: Kinesin-like protein KIN-14A (954 aa).

Residues 24 to 142 (ALRRHQAATW…CVISLKSYHE (119 aa)) form the Calponin-homology (CH) domain. The stretch at 242–293 (LSRQLEKEQSSNSQVENRRRLLQAQESELLELKSMFQEVKIDFRTLKTQFQD) forms a coiled coil. The 320-residue stretch at 332–651 (NIRVFCRIRP…LKFAQRASCV (320 aa)) folds into the Kinesin motor domain. Residue 413–420 (GQTGSGKT) coordinates ATP. Residues 656 to 692 (AHANKESNEIRELKEQVENLKRALAAKELEKSSFKLK) are a coiled coil. Positions 697 to 709 (VRERAKQVPERTP) are enriched in basic and acidic residues. Disordered stretches follow at residues 697 to 743 (VRER…TKLN), 824 to 858 (NLEV…RKSI), and 882 to 954 (PAKI…KRWL). Polar residues-rich tracts occupy residues 831 to 849 (DEPS…NATK) and 886 to 898 (ANST…SSIT).

It belongs to the TRAFAC class myosin-kinesin ATPase superfamily. Kinesin family. KIN-14 subfamily.

The polypeptide is Kinesin-like protein KIN-14A (Oryza sativa subsp. japonica (Rice)).